A 301-amino-acid polypeptide reads, in one-letter code: Homoserine O-acetyltransferase (301 aa).

Cysteine 142 functions as the Acyl-thioester intermediate in the catalytic mechanism. The substrate site is built by lysine 163 and serine 192. Residue histidine 235 is the Proton acceptor of the active site. Residue glutamate 237 is part of the active site. Arginine 249 serves as a coordination point for substrate.

The protein belongs to the MetA family.

The protein resides in the cytoplasm. The catalysed reaction is L-homoserine + acetyl-CoA = O-acetyl-L-homoserine + CoA. The protein operates within amino-acid biosynthesis; L-methionine biosynthesis via de novo pathway; O-acetyl-L-homoserine from L-homoserine: step 1/1. In terms of biological role, transfers an acetyl group from acetyl-CoA to L-homoserine, forming acetyl-L-homoserine. The chain is Homoserine O-acetyltransferase from Bacillus cereus (strain ZK / E33L).